A 208-amino-acid chain; its full sequence is Large ribosomal subunit protein uL3 (208 aa).

N5-methylglutamine is present on Q149.

It belongs to the universal ribosomal protein uL3 family. In terms of assembly, part of the 50S ribosomal subunit. Forms a cluster with proteins L14 and L19. Methylated by PrmB.

One of the primary rRNA binding proteins, it binds directly near the 3'-end of the 23S rRNA, where it nucleates assembly of the 50S subunit. In Glaesserella parasuis serovar 5 (strain SH0165) (Haemophilus parasuis), this protein is Large ribosomal subunit protein uL3.